Reading from the N-terminus, the 205-residue chain is Putative 3-methyladenine DNA glycosylase (205 aa).

This sequence belongs to the DNA glycosylase MPG family.

The chain is Putative 3-methyladenine DNA glycosylase from Staphylococcus epidermidis (strain ATCC 35984 / DSM 28319 / BCRC 17069 / CCUG 31568 / BM 3577 / RP62A).